We begin with the raw amino-acid sequence, 131 residues long: Translation initiation factor 5A (131 aa).

Hypusine is present on Lys36.

The protein belongs to the eIF-5A family.

It is found in the cytoplasm. Functions by promoting the formation of the first peptide bond. This chain is Translation initiation factor 5A (eIF5A), found in Saccharolobus islandicus (strain Y.N.15.51 / Yellowstone #2) (Sulfolobus islandicus).